A 269-amino-acid chain; its full sequence is Signal recognition particle receptor subunit beta (269 aa).

Residues 35–55 (LLSVAVALLAVLLTLVFWKFI) form a helical membrane-spanning segment. GTP contacts are provided by residues 69 to 77 (GLCDSGKTL) and 90 to 93 (TQTS). Position 110 is a phosphoserine (Ser110). Residues Gly118 and 178–181 (NKQD) contribute to the GTP site. The residue at position 212 (Thr212) is a Phosphothreonine. Ala246 contacts GTP.

This sequence belongs to the SRP receptor beta subunit family. As to quaternary structure, heterodimer with SRPRA.

It localises to the endoplasmic reticulum membrane. Functionally, component of the SRP (signal recognition particle) receptor. Ensures, in conjunction with the signal recognition particle, the correct targeting of the nascent secretory proteins to the endoplasmic reticulum membrane system. May mediate the membrane association of SR. The chain is Signal recognition particle receptor subunit beta (Srprb) from Mus musculus (Mouse).